Reading from the N-terminus, the 146-residue chain is Hemoglobin subunit beta (146 aa).

N-acetylvaline is present on valine 1. Residues 2–146 (HLTADEKAAV…VATALAHKYH (145 aa)) enclose the Globin domain. Threonine 12 is subject to Phosphothreonine. Serine 44 is modified (phosphoserine). Lysine 59 carries the N6-acetyllysine modification. Heme b is bound at residue histidine 63. Position 82 is an N6-acetyllysine (lysine 82). Residue histidine 92 coordinates heme b. Cysteine 93 carries the S-nitrosocysteine modification. At lysine 144 the chain carries N6-acetyllysine.

This sequence belongs to the globin family. As to quaternary structure, heterotetramer of two alpha chains and two beta chains. Red blood cells.

In terms of biological role, involved in oxygen transport from the lung to the various peripheral tissues. The sequence is that of Hemoglobin subunit beta (HBB) from Taphozous georgianus (Sharp-nosed tomb bat).